We begin with the raw amino-acid sequence, 1056 residues long: Isoleucine--tRNA ligase (1056 aa).

A 'HIGH' region motif is present at residues P56 to H66. Positions K603 to S607 match the 'KMSKS' region motif. Position 606 (K606) interacts with ATP.

The protein belongs to the class-I aminoacyl-tRNA synthetase family. IleS type 2 subfamily. As to quaternary structure, monomer. The cofactor is Zn(2+).

The protein resides in the cytoplasm. The catalysed reaction is tRNA(Ile) + L-isoleucine + ATP = L-isoleucyl-tRNA(Ile) + AMP + diphosphate. Catalyzes the attachment of isoleucine to tRNA(Ile). As IleRS can inadvertently accommodate and process structurally similar amino acids such as valine, to avoid such errors it has two additional distinct tRNA(Ile)-dependent editing activities. One activity is designated as 'pretransfer' editing and involves the hydrolysis of activated Val-AMP. The other activity is designated 'posttransfer' editing and involves deacylation of mischarged Val-tRNA(Ile). This is Isoleucine--tRNA ligase from Bdellovibrio bacteriovorus (strain ATCC 15356 / DSM 50701 / NCIMB 9529 / HD100).